The sequence spans 221 residues: Toxin coregulated pilus biosynthesis protein P (221 aa).

The ompR/PhoB-type DNA-binding region spans 5-109; sequence RVIYQFPDNL…VKLQGYRINI (105 aa). Residues 143 to 163 form a helical membrane-spanning segment; it reads VVPYLVFSALYVALLPVIWWS.

Its subcellular location is the cell membrane. Functionally, involved in TCP pilus biogenesis. This Vibrio cholerae serotype O1 (strain ATCC 39315 / El Tor Inaba N16961) protein is Toxin coregulated pilus biosynthesis protein P (tcpP).